The following is a 336-amino-acid chain: Tetraacyldisaccharide 4'-kinase (336 aa).

58-65 (AVGGSGKT) lines the ATP pocket.

Belongs to the LpxK family.

The catalysed reaction is a lipid A disaccharide + ATP = a lipid IVA + ADP + H(+). It functions in the pathway glycolipid biosynthesis; lipid IV(A) biosynthesis; lipid IV(A) from (3R)-3-hydroxytetradecanoyl-[acyl-carrier-protein] and UDP-N-acetyl-alpha-D-glucosamine: step 6/6. Its function is as follows. Transfers the gamma-phosphate of ATP to the 4'-position of a tetraacyldisaccharide 1-phosphate intermediate (termed DS-1-P) to form tetraacyldisaccharide 1,4'-bis-phosphate (lipid IVA). The protein is Tetraacyldisaccharide 4'-kinase of Aromatoleum aromaticum (strain DSM 19018 / LMG 30748 / EbN1) (Azoarcus sp. (strain EbN1)).